The following is a 279-amino-acid chain: DegV domain-containing protein SpyM3_1149 (279 aa).

One can recognise a DegV domain in the interval 4–278 (IKIVTDSSIT…EGAFAVMVRY (275 aa)). T62 and S95 together coordinate hexadecanoate.

May bind long-chain fatty acids, such as palmitate, and may play a role in lipid transport or fatty acid metabolism. The chain is DegV domain-containing protein SpyM3_1149 from Streptococcus pyogenes serotype M3 (strain ATCC BAA-595 / MGAS315).